Consider the following 215-residue polypeptide: Orotate phosphoribosyltransferase (215 aa).

A 5-phospho-alpha-D-ribose 1-diphosphate-binding site is contributed by lysine 26. Orotate is bound at residue 34–35 (FF). Residues 72–73 (YK), arginine 99, lysine 100, lysine 103, histidine 105, and 124–132 (DDVITAGTA) each bind 5-phospho-alpha-D-ribose 1-diphosphate. Orotate contacts are provided by threonine 128 and arginine 156.

This sequence belongs to the purine/pyrimidine phosphoribosyltransferase family. PyrE subfamily. Homodimer. Requires Mg(2+) as cofactor.

It catalyses the reaction orotidine 5'-phosphate + diphosphate = orotate + 5-phospho-alpha-D-ribose 1-diphosphate. It functions in the pathway pyrimidine metabolism; UMP biosynthesis via de novo pathway; UMP from orotate: step 1/2. Its function is as follows. Catalyzes the transfer of a ribosyl phosphate group from 5-phosphoribose 1-diphosphate to orotate, leading to the formation of orotidine monophosphate (OMP). The protein is Orotate phosphoribosyltransferase of Cellvibrio japonicus (strain Ueda107) (Pseudomonas fluorescens subsp. cellulosa).